The chain runs to 901 residues: Protein translocase subunit SecA (901 aa).

ATP contacts are provided by residues Gln87, 105 to 109 (GEGKT), and Asp512. The interval 839 to 901 (QMEEQRRQES…KYKQCHGRLA (63 aa)) is disordered. A compositionally biased stretch (basic and acidic residues) spans 841-850 (EEQRRQESER). Zn(2+) contacts are provided by Cys885, Cys887, Cys896, and His897. Residues 891–901 (KKYKQCHGRLA) are compositionally biased toward basic residues.

Belongs to the SecA family. In terms of assembly, monomer and homodimer. Part of the essential Sec protein translocation apparatus which comprises SecA, SecYEG and auxiliary proteins SecDF-YajC and YidC. The cofactor is Zn(2+).

Its subcellular location is the cell inner membrane. The protein resides in the cytoplasm. The catalysed reaction is ATP + H2O + cellular proteinSide 1 = ADP + phosphate + cellular proteinSide 2.. Its function is as follows. Part of the Sec protein translocase complex. Interacts with the SecYEG preprotein conducting channel. Has a central role in coupling the hydrolysis of ATP to the transfer of proteins into and across the cell membrane, serving both as a receptor for the preprotein-SecB complex and as an ATP-driven molecular motor driving the stepwise translocation of polypeptide chains across the membrane. In Erwinia tasmaniensis (strain DSM 17950 / CFBP 7177 / CIP 109463 / NCPPB 4357 / Et1/99), this protein is Protein translocase subunit SecA.